The chain runs to 106 residues: uncharacterized protein (106 aa).

Transmembrane regions (helical) follow at residues 3-23 (WFLLVIAGIEEIIAAIAMKYI), 29-49 (KWPIIVMTVGFGLSFYCLSQA), 50-70 (MIVLPAGVAYAVWTGIGSIGV), and 82-102 (FQLSQVISLCLILAGVIGLRL).

The protein belongs to the drug/metabolite transporter (DMT) superfamily. Small multidrug resistance (SMR) (TC 2.A.7.1) family.

The protein resides in the cell membrane. This is an uncharacterized protein from Bacillus subtilis (strain 168).